We begin with the raw amino-acid sequence, 876 residues long: MQEHYQPAAIEPAAQKKWDDARISNVSEDASKPKYYCLSMFPYPSGKLHMGHVRNYTIGDVLSRFKLLNGFNVMQPMGWDAFGMPAENAAMKNNVAPAAWTYDNIEYMKTQLKSLGFAIDWEREVATCKPEYYRWEQWLFTKLFEKGIVYRKNGTVNWDPVDQTVLANEQVIDGRGWRSGALIEKREIPMYYFKITDYAEELLNDLDKLEHWPEQVKTMQRNWIGKSRGMTVRFAVSDDSKQGLEGDYAKFLQVYTTRPDTLMGATYVAVAAEHPLATAAAADKPELQAFIAECKAGSVAEADMATMEKKGVPTGRYVVNPLNGDKLEVWIANYVLWGYGDGAVMAVPAHDERDFEFAAKYNLPKKQVIAVGDNAFDANRWQEWYGDKENGVLVNSGDLDGLDFQTAFDAVAAKLQSQGAGEPKTQYRLRDWGISRQRYWGCPIPIVHCEKCGDVPVPADQLPVVLPENVVPDGMGSPLAKMPEFYETSCPCCGGAAKRETDTMDTFMESSWYFFRYMSPKFSDGMVSAESAKYWGAVDQYIGGIEHAILHLLYARFFTKLMRDEGLVNVDEPFERLLTQGMVVCETYYRENDKGGKDWINPADVELTFDDKGRPVSAVLKADGLPVVISGTEKMSKSKNNGVDPQELINAYGADTARLFMMFAAPPEQSLEWSDSGVEGAHRFLRRLWRTVYEYLKQGGAVKAFAGNQDGLSKELKDLRHKLHSTTAKVSDDYGRRQQFNTAIAAVMELLNQYDKTDTGSEQGRAVAQEVLEAAVRLLWPIVPHICETLWSELNGAKLWEAGWPTVDEAALVKSEIEVMVQVNGKLRGKITVAADASKADLEAAALANEGAVKFMEGKPAKKIIVVPGRLVNIVV.

A 'HIGH' region motif is present at residues 42 to 52 (PYPSGKLHMGH). Residues 634–638 (KMSKS) carry the 'KMSKS' region motif. Lys637 serves as a coordination point for ATP.

Belongs to the class-I aminoacyl-tRNA synthetase family.

The protein resides in the cytoplasm. It carries out the reaction tRNA(Leu) + L-leucine + ATP = L-leucyl-tRNA(Leu) + AMP + diphosphate. This is Leucine--tRNA ligase from Neisseria gonorrhoeae (strain ATCC 700825 / FA 1090).